Reading from the N-terminus, the 204-residue chain is Casparian strip membrane protein 3 (204 aa).

Topologically, residues M1 to R41 are cytoplasmic. The chain crosses the membrane as a helical span at residues G42 to A62. Over G63–Q92 the chain is Extracellular. Residues F93–V113 form a helical membrane-spanning segment. Residues V114–R125 lie on the Cytoplasmic side of the membrane. Residues L126 to A146 form a helical membrane-spanning segment. At A147–H204 the chain is on the extracellular side.

It belongs to the Casparian strip membrane proteins (CASP) family. In terms of assembly, homodimer and heterodimers.

The protein resides in the cell membrane. Functionally, regulates membrane-cell wall junctions and localized cell wall deposition. Required for establishment of the Casparian strip membrane domain (CSD) and the subsequent formation of Casparian strips, a cell wall modification of the root endodermis that determines an apoplastic barrier between the intraorganismal apoplasm and the extraorganismal apoplasm and prevents lateral diffusion. The protein is Casparian strip membrane protein 3 of Raphanus sativus (Radish).